Consider the following 51-residue polypeptide: Large ribosomal subunit protein eL39 (51 aa).

Residues 1 to 19 (MSHNMKGQKKRLAKAHKQN) are compositionally biased toward basic residues. The tract at residues 1 to 23 (MSHNMKGQKKRLAKAHKQNSRVP) is disordered.

The protein belongs to the eukaryotic ribosomal protein eL39 family.

This Methanosarcina mazei (strain ATCC BAA-159 / DSM 3647 / Goe1 / Go1 / JCM 11833 / OCM 88) (Methanosarcina frisia) protein is Large ribosomal subunit protein eL39.